A 518-amino-acid chain; its full sequence is G-protein coupled receptor 161 (518 aa).

Residues 1–26 lie on the Extracellular side of the membrane; that stretch reads MNSSSDGANEGAGAAADNGPTKVAES. The N-linked (GlcNAc...) asparagine glycan is linked to asparagine 2. A helical membrane pass occupies residues 27–47; that stretch reads IAIIIIDILICLGNLVIVVTL. Over 48–59 the chain is Cytoplasmic; it reads YKKSYLLSLSNK. A helical transmembrane segment spans residues 60–80; that stretch reads FVFSLTFSNLLLSMLVLPFVV. Residues 81–97 are Extracellular-facing; sequence VSSILREWIFGVVWCNF. An intrachain disulfide couples cysteine 95 to cysteine 173. N-linked (GlcNAc...) asparagine glycosylation is present at asparagine 96. The chain crosses the membrane as a helical span at residues 98-118; that stretch reads SALLYMLISSASMLTLGIIAI. Over 119-138 the chain is Cytoplasmic; the sequence is DRYYAVLYPMVYPMKITGNR. Residues 139-159 traverse the membrane as a helical segment; it reads AVLALVYVWLHSLIGCLPPLF. Residues 160 to 185 lie on the Extracellular side of the membrane; the sequence is GWSTLEFDHFKWMCVAAWHKEAGYTA. A helical transmembrane segment spans residues 186-206; sequence FWQVWCALLPFIVMMICYGFI. The Cytoplasmic segment spans residues 207-264; the sequence is FRVARIKARKIHCGTVIIVQEASQKNGRKNSSTSTSSSGSRKNGFSSIVYSANQCKAL. Residues 265-285 traverse the membrane as a helical segment; that stretch reads ITILVVIGAFVLTWGPYMIVI. Residues 286-301 lie on the Extracellular side of the membrane; sequence STEALKGKNSVSPVLE. Residues 302-322 form a helical membrane-spanning segment; the sequence is TLATWLSFTSAICHPLIYGLW. Residues 323-518 are Cytoplasmic-facing; sequence NKTVRKELLG…GNIETSKCDV (196 aa). The segment at 429–448 is disordered; sequence EVEQKNDARTMPTQPTAPSE. The span at 439-448 shows a compositional bias: polar residues; it reads MPTQPTAPSE.

Belongs to the G-protein coupled receptor 1 family.

It localises to the cell projection. Its subcellular location is the cilium membrane. The protein localises to the cell membrane. Functionally, key negative regulator of Shh signaling during neural tube development. Recruited to primary cilia and acts as a regulator of the PKA-dependent basal repression machinery in Shh signaling by increasing cAMP levels, leading to promote the PKA-dependent processing of gli3 into gli3r and repress the Shh signaling. In presence of shh, it is removed from primary cilia, preventing its activity and allowing activation of the Shh signaling. The chain is G-protein coupled receptor 161 (gpr161) from Xenopus tropicalis (Western clawed frog).